The following is a 351-amino-acid chain: Dysbindin (351 aa).

The stretch at 106–179 (FLADLECLTA…AELDAEHAQK (74 aa)) forms a coiled coil. The interval 291 to 325 (RHKLSSLSSTCTDSASQEASEGESPVVQSDEEEVQ) is disordered. Positions 295–306 (SSLSSTCTDSAS) are enriched in low complexity.

Belongs to the dysbindin family. As to quaternary structure, component of the biogenesis of lysosome-related organelles complex 1 (BLOC-1).

It localises to the cytoplasm. It is found in the cytoplasmic vesicle membrane. Its subcellular location is the cytoplasmic vesicle. The protein localises to the secretory vesicle. The protein resides in the synaptic vesicle membrane. It localises to the endosome membrane. It is found in the melanosome membrane. Its subcellular location is the nucleus. The protein localises to the postsynaptic density. The protein resides in the endoplasmic reticulum. Component of the BLOC-1 complex, a complex that is required for normal biogenesis of lysosome-related organelles (LRO), such as platelet dense granules and melanosomes. Plays a role in intracellular vesicle trafficking. Plays a role in synaptic vesicle trafficking and in neurotransmitter release. May be required for normal dopamine homeostasis in the cerebral cortex, hippocampus, and hypothalamus. Plays a role in the regulation of cell surface exposure of DRD2. Contributes to the regulation of dopamine signaling. May play a role in actin cytoskeleton reorganization and neurite outgrowth. The polypeptide is Dysbindin (DTNBP1) (Gallus gallus (Chicken)).